The following is a 130-amino-acid chain: Small ribosomal subunit protein uS9 (130 aa).

This sequence belongs to the universal ribosomal protein uS9 family.

This is Small ribosomal subunit protein uS9 from Pseudomonas fluorescens (strain SBW25).